The chain runs to 530 residues: Seeligeriolysin (530 aa).

An N-terminal signal peptide occupies residues 1 to 25; it reads MKIFGLVIMSLLFVSLPITQQPEAR. The tract at residues 36-55 is disordered; that stretch reads TISPAETPESPPATPKTPVE. 4 beta stranded membrane-spanning segments follow: residues 215–228, 235–244, 313–322, and 330–342; these read ESQL…AFKA, VNFEAISDGK, SNKVKTAFEA, and KGDV…IKNS. The Conserved undecapeptide motif lies at 484–494; sequence ECTGLFWEWWR. Positions 516-517 match the Cholesterol binding motif; that stretch reads TL.

This sequence belongs to the cholesterol-dependent cytolysin family. As to quaternary structure, homooligomeric pore complex of 35 to 50 subunits; when inserted in the host membrane.

It is found in the secreted. The protein localises to the host cell membrane. Its function is as follows. A cholesterol-dependent toxin that causes cytolysis by forming pores in cholesterol containing host membranes. L.seeligeri is non-pathogenic, perhaps in part because this protein is about 25% as toxic as listeriolysin O. Mutating a single residue in the undecapeptide increases toxicity 2-fold. After binding to target membranes, the protein undergoes a major conformation change, leading to its insertion in the host membrane and formation of an oligomeric pore complex. Cholesterol is required for binding to host membranes, membrane insertion and pore formation; cholesterol binding is mediated by a Thr-Leu pair in the C-terminus. Can be reversibly inactivated by oxidation. The protein is Seeligeriolysin of Listeria seeligeri.